The primary structure comprises 214 residues: Protein PAM68, chloroplastic (214 aa).

Disordered stretches follow at residues 1 to 26 and 62 to 111; these read MASV…NNKQ and ATMN…ERGV. Residues 1–35 constitute a chloroplast transit peptide; the sequence is MASVPCSFKLSAHRRSSSKLDGNNKQCSSLVERLR. Residues 36–124 are Stromal-facing; sequence DKTKSQVPKS…IVTNRMISRM (89 aa). Residues 75-84 show a composition bias toward basic residues; it reads KKTKKSKKPK. The span at 89-106 shows a compositional bias: acidic residues; that stretch reads SDEDDDDEDEDDDDEEDE. The helical transmembrane segment at 125 to 145 threads the bilayer; it reads GFTVGLPLFIGLLFFPFFYYL. Over 146-152 the chain is Lumenal, thylakoid; it reads KVGLKVD. The chain crosses the membrane as a helical span at residues 153-173; that stretch reads VPTWVPFIVSFVFFGTALAGV. Residues 174 to 214 lie on the Stromal side of the membrane; the sequence is SYGIVSSSWDPLREGSLLGWNEAKKNWPVFWQSFWNSSDKR.

In terms of assembly, interacts with the PSII subunits psbA, psbB, psbC, psbD, psbH and psbI, but not with psbE, psbF or psbO. Interacts with the PSII assembly factors HCF136, LPA1, LPA2 and ALB3.

The protein resides in the plastid. Its subcellular location is the chloroplast thylakoid membrane. Involved in early steps in photosystem II (PSII) biogenesis and in maturation and stability of newly synthesized psbA protein. The chain is Protein PAM68, chloroplastic (PAM68) from Arabidopsis thaliana (Mouse-ear cress).